We begin with the raw amino-acid sequence, 323 residues long: Aldo-keto reductase family 1 member C1 (323 aa).

NADP(+) contacts are provided by residues glycine 20 to tyrosine 24 and aspartate 50. Tyrosine 24 contacts substrate. Tyrosine 55 functions as the Proton donor in the catalytic mechanism. Residue histidine 117 participates in substrate binding. Residues serine 166–asparagine 167, glutamine 190, and tyrosine 216–histidine 222 each bind NADP(+). Residues histidine 222 and tryptophan 227 each coordinate substrate. Residue lysine 270–asparagine 280 participates in NADP(+) binding.

It belongs to the aldo/keto reductase family. As to quaternary structure, monomer. In terms of tissue distribution, expressed in all tissues tested including liver, prostate, testis, adrenal gland, brain, uterus, mammary gland and keratinocytes. Highest levels found in liver, mammary gland and brain.

It is found in the cytoplasm. It localises to the cytosol. The enzyme catalyses a 3alpha-hydroxysteroid + NADP(+) = a 3-oxosteroid + NADPH + H(+). The catalysed reaction is a 3alpha-hydroxysteroid + NAD(+) = a 3-oxosteroid + NADH + H(+). It carries out the reaction (17R,20S)-17,20-dihydroxypregn-4-en-3-one + NADP(+) = 17alpha-hydroxyprogesterone + NADPH + H(+). It catalyses the reaction (17R,20S)-17,20-dihydroxypregn-4-en-3-one + NAD(+) = 17alpha-hydroxyprogesterone + NADH + H(+). The enzyme catalyses (20S)-hydroxypregn-4-en-3-one + NADP(+) = progesterone + NADPH + H(+). The catalysed reaction is (20S)-hydroxypregn-4-en-3-one + NAD(+) = progesterone + NADH + H(+). It carries out the reaction (1R,2R)-1,2-dihydrobenzene-1,2-diol + NADP(+) = catechol + NADPH + H(+). It catalyses the reaction (S)-indan-1-ol + NAD(+) = indan-1-one + NADH + H(+). The enzyme catalyses (S)-indan-1-ol + NADP(+) = indan-1-one + NADPH + H(+). The catalysed reaction is 5alpha-androstane-3alpha,17beta-diol + NADP(+) = 17beta-hydroxy-5alpha-androstan-3-one + NADPH + H(+). It carries out the reaction 5alpha-androstane-3beta,17beta-diol + NADP(+) = 17beta-hydroxy-5alpha-androstan-3-one + NADPH + H(+). It catalyses the reaction 5alpha-androstane-3alpha,17beta-diol + NAD(+) = 17beta-hydroxy-5alpha-androstan-3-one + NADH + H(+). The enzyme catalyses 17beta-hydroxy-5alpha-androstan-3-one + NADP(+) = 5alpha-androstan-3,17-dione + NADPH + H(+). The catalysed reaction is androsterone + NADP(+) = 5alpha-androstan-3,17-dione + NADPH + H(+). It carries out the reaction androsterone + NADPH + H(+) = 5alpha-androstane-3alpha,17beta-diol + NADP(+). It catalyses the reaction 5alpha-androstane-3alpha,17beta-diol + NAD(+) = androsterone + NADH + H(+). The enzyme catalyses 17beta-estradiol + NADP(+) = estrone + NADPH + H(+). The catalysed reaction is 17beta-estradiol + NAD(+) = estrone + NADH + H(+). It carries out the reaction testosterone + NADP(+) = androst-4-ene-3,17-dione + NADPH + H(+). It catalyses the reaction 20alpha-hydroxy-5beta-pregnan-3-one + NADP(+) = 5beta-pregnan-3,20-dione + NADPH + H(+). The enzyme catalyses 3beta-hydroxy-5beta-pregnane-20-one + NADP(+) = 5beta-pregnan-3,20-dione + NADPH + H(+). The catalysed reaction is 3beta-hydroxy-5beta-pregnane-20-one + NADPH + H(+) = 3beta,20alpha-dihydroxy-5beta-pregnane + NADP(+). It carries out the reaction (3beta,5alpha,17beta)-3-hydroxyandrostan-17-yl sulfate + NADP(+) = 5alpha-dihydrotestosterone sulfate + NADPH + H(+). It functions in the pathway steroid metabolism. Its activity is regulated as follows. Inhibited by hexestrol with an IC(50) of 9.5 uM, 1,10-phenanthroline with an IC(50) of 55 uM, 1,7-phenanthroline with an IC(50) of 72 uM, flufenamic acid with an IC(50) of 6.0 uM, indomethacin with an IC(50) of 140 uM, ibuprofen with an IC(50) of 950 uM, lithocholic acid with an IC(50) of 25 uM, ursodeoxycholic acid with an IC(50) of 340 uM and chenodeoxycholic acid with an IC(50) of 570 uM. The oxidation reaction is inhibited by low micromolar concentrations of NADPH. Cytosolic aldo-keto reductase that catalyzes the NADH and NADPH-dependent reduction of ketosteroids to hydroxysteroids. Most probably acts as a reductase in vivo since the oxidase activity measured in vitro is inhibited by physiological concentrations of NADPH. Displays a broad positional specificity acting on positions 3, 17 and 20 of steroids and regulates the metabolism of hormones like estrogens and androgens. May also reduce conjugated steroids such as 5alpha-dihydrotestosterone sulfate. Displays affinity for bile acids. This chain is Aldo-keto reductase family 1 member C1 (AKR1C1), found in Homo sapiens (Human).